We begin with the raw amino-acid sequence, 447 residues long: Tol-Pal system protein TolB (447 aa).

An N-terminal signal peptide occupies residues 1-29; it reads MITMSRIRSLAAFAVFVILGVAAVLPAQA.

It belongs to the TolB family. As to quaternary structure, the Tol-Pal system is composed of five core proteins: the inner membrane proteins TolA, TolQ and TolR, the periplasmic protein TolB and the outer membrane protein Pal. They form a network linking the inner and outer membranes and the peptidoglycan layer.

It is found in the periplasm. Its function is as follows. Part of the Tol-Pal system, which plays a role in outer membrane invagination during cell division and is important for maintaining outer membrane integrity. This chain is Tol-Pal system protein TolB, found in Paramagnetospirillum magneticum (strain ATCC 700264 / AMB-1) (Magnetospirillum magneticum).